A 227-amino-acid polypeptide reads, in one-letter code: Cytochrome c oxidase subunit 2 (227 aa).

At 1-14 the chain is on the mitochondrial intermembrane side; that stretch reads MAYPFQLGLQDATS. A helical transmembrane segment spans residues 15–45; the sequence is PIMEELMNFHDHTLMIVFLISTLVLYIISLM. Residues 46-59 lie on the Mitochondrial matrix side of the membrane; sequence LTTKLTHTSTMDAQ. The chain crosses the membrane as a helical span at residues 60–87; sequence EVETVWTILPAVILIMIALPSLRILYMM. The Mitochondrial intermembrane segment spans residues 88-227; sequence DEINNPVLTV…HFENWSTSMI (140 aa). Residues His161, Cys196, Glu198, Cys200, His204, and Met207 each contribute to the Cu cation site. Mg(2+) is bound at residue Glu198.

Belongs to the cytochrome c oxidase subunit 2 family. In terms of assembly, component of the cytochrome c oxidase (complex IV, CIV), a multisubunit enzyme composed of 14 subunits. The complex is composed of a catalytic core of 3 subunits MT-CO1, MT-CO2 and MT-CO3, encoded in the mitochondrial DNA, and 11 supernumerary subunits COX4I, COX5A, COX5B, COX6A, COX6B, COX6C, COX7A, COX7B, COX7C, COX8 and NDUFA4, which are encoded in the nuclear genome. The complex exists as a monomer or a dimer and forms supercomplexes (SCs) in the inner mitochondrial membrane with NADH-ubiquinone oxidoreductase (complex I, CI) and ubiquinol-cytochrome c oxidoreductase (cytochrome b-c1 complex, complex III, CIII), resulting in different assemblies (supercomplex SCI(1)III(2)IV(1) and megacomplex MCI(2)III(2)IV(2)). Found in a complex with TMEM177, COA6, COX18, COX20, SCO1 and SCO2. Interacts with TMEM177 in a COX20-dependent manner. Interacts with COX20. Interacts with COX16. Requires Cu cation as cofactor.

It is found in the mitochondrion inner membrane. The enzyme catalyses 4 Fe(II)-[cytochrome c] + O2 + 8 H(+)(in) = 4 Fe(III)-[cytochrome c] + 2 H2O + 4 H(+)(out). In terms of biological role, component of the cytochrome c oxidase, the last enzyme in the mitochondrial electron transport chain which drives oxidative phosphorylation. The respiratory chain contains 3 multisubunit complexes succinate dehydrogenase (complex II, CII), ubiquinol-cytochrome c oxidoreductase (cytochrome b-c1 complex, complex III, CIII) and cytochrome c oxidase (complex IV, CIV), that cooperate to transfer electrons derived from NADH and succinate to molecular oxygen, creating an electrochemical gradient over the inner membrane that drives transmembrane transport and the ATP synthase. Cytochrome c oxidase is the component of the respiratory chain that catalyzes the reduction of oxygen to water. Electrons originating from reduced cytochrome c in the intermembrane space (IMS) are transferred via the dinuclear copper A center (CU(A)) of subunit 2 and heme A of subunit 1 to the active site in subunit 1, a binuclear center (BNC) formed by heme A3 and copper B (CU(B)). The BNC reduces molecular oxygen to 2 water molecules using 4 electrons from cytochrome c in the IMS and 4 protons from the mitochondrial matrix. The protein is Cytochrome c oxidase subunit 2 (MT-CO2) of Apodemus semotus (Taiwan field mouse).